We begin with the raw amino-acid sequence, 230 residues long: Stachydrine N-demethylase reductase subunit Stc3 (230 aa).

The protein belongs to the non-flavoprotein flavin reductase family. In terms of assembly, the system is probably composed of an oxygenase subunit (Stc2) and two reductase subunits (Stc3 and Stc4).

Reductase involved in the catabolism of stachydrine (L-proline betaine), a source of carbon and nitrogen. Part of a Rieske-type oxygenase system that catalyzes the demethylation of stachydrine to produce N-methyl-L-proline (monomethylproline). This subunit is probably involved in the transfer of electrons from NAD(P)H to the catalytic subunit Stc2. This is Stachydrine N-demethylase reductase subunit Stc3 from Rhizobium meliloti (strain 1021) (Ensifer meliloti).